We begin with the raw amino-acid sequence, 308 residues long: Glutaminase (308 aa).

S66, N117, E161, N168, Y192, Y244, and V262 together coordinate substrate.

It belongs to the glutaminase family. As to quaternary structure, homotetramer.

It carries out the reaction L-glutamine + H2O = L-glutamate + NH4(+). The protein is Glutaminase of Salmonella heidelberg (strain SL476).